Reading from the N-terminus, the 1925-residue chain is Plexin-D1 (1925 aa).

Residues Met1–Leu21 show a composition bias toward low complexity. Residues Met1–His26 form a disordered region. Residues Met1–Ala48 form the signal peptide. Residues Leu49 to Val548 form the Sema domain. The Extracellular segment spans residues Leu49–Ala1271. Intrachain disulfides connect Cys106/Cys116 and Cys142/Cys150. Residues Asn157 and Asn226 are each glycosylated (N-linked (GlcNAc...) asparagine). 2 disulfide bridges follow: Cys324–Cys447 and Cys347–Cys391. Residue Asn483 is glycosylated (N-linked (GlcNAc...) asparagine). Disulfide bonds link Cys551–Cys568, Cys557–Cys602, Cys560–Cys577, Cys571–Cys583, and Cys639–Cys663. IPT/TIG domains follow at residues Pro893 to Gln977, Pro983 to Phe1065, and Pro1071 to Gly1145. The N-linked (GlcNAc...) asparagine glycan is linked to Asn967. N-linked (GlcNAc...) asparagine glycosylation is present at Asn1120. Residues Ile1272 to Val1292 traverse the membrane as a helical segment. Topologically, residues Phe1293 to Ala1925 are cytoplasmic.

It belongs to the plexin family. As to quaternary structure, interacts with NRP1 and SEMA4A. Interacts with SH3BP1; they dissociate upon SEMA3E binding to PLXND1 allowing SH3BP1 to transduce downstream signal through RAC1 inactivation. In terms of tissue distribution, detected in embryonic heart and vascular endothelium, brain, dorsal root ganglia, adrenal gland, lung mesenchyme, small intestine and in the ossification centers of vertebral bodies.

Its subcellular location is the cell membrane. The protein resides in the cell projection. It is found in the lamellipodium membrane. Its function is as follows. Cell surface receptor for SEMA4A and for class 3 semaphorins, such as SEMA3A, SEMA3C and SEMA3E. Plays an important role in cell-cell signaling, and in regulating the migration of a wide spectrum of cell types. Regulates the migration of thymocytes in the medulla. Regulates endothelial cell migration. Plays an important role in ensuring the specificity of synapse formation. Mediates anti-angiogenic signaling in response to SEMA3E. Required for normal development of the heart and vasculature. In Mus musculus (Mouse), this protein is Plexin-D1 (Plxnd1).